Consider the following 179-residue polypeptide: Protein Syd (179 aa).

It belongs to the Syd family.

Its subcellular location is the cell inner membrane. In terms of biological role, interacts with the SecY protein in vivo. May bind preferentially to an uncomplexed state of SecY, thus functioning either as a chelating agent for excess SecY in the cell or as a regulatory factor that negatively controls the translocase function. This Pseudoalteromonas translucida (strain TAC 125) protein is Protein Syd.